A 128-amino-acid chain; its full sequence is Large ribosomal subunit protein bL17 (128 aa).

Belongs to the bacterial ribosomal protein bL17 family. As to quaternary structure, part of the 50S ribosomal subunit. Contacts protein L32.

The protein is Large ribosomal subunit protein bL17 of Petrotoga mobilis (strain DSM 10674 / SJ95).